A 341-amino-acid polypeptide reads, in one-letter code: S-adenosylmethionine:tRNA ribosyltransferase-isomerase (341 aa).

This sequence belongs to the QueA family. In terms of assembly, monomer.

It localises to the cytoplasm. The catalysed reaction is 7-aminomethyl-7-carbaguanosine(34) in tRNA + S-adenosyl-L-methionine = epoxyqueuosine(34) in tRNA + adenine + L-methionine + 2 H(+). The protein operates within tRNA modification; tRNA-queuosine biosynthesis. Transfers and isomerizes the ribose moiety from AdoMet to the 7-aminomethyl group of 7-deazaguanine (preQ1-tRNA) to give epoxyqueuosine (oQ-tRNA). The sequence is that of S-adenosylmethionine:tRNA ribosyltransferase-isomerase from Clostridium botulinum (strain Langeland / NCTC 10281 / Type F).